The chain runs to 141 residues: Putative RING-H2 finger protein ATL62 (141 aa).

The helical transmembrane segment at 14 to 32 (FFAILTVFYSIFRCCLAYC) threads the bilayer. The segment at 79–121 (CVVCLSKFIDEDKARVLPSCNHCFHFDFTDTWLHSDYTCPNCR) adopts an RING-type; degenerate zinc-finger fold.

The protein belongs to the RING-type zinc finger family. ATL subfamily.

The protein localises to the membrane. The catalysed reaction is S-ubiquitinyl-[E2 ubiquitin-conjugating enzyme]-L-cysteine + [acceptor protein]-L-lysine = [E2 ubiquitin-conjugating enzyme]-L-cysteine + N(6)-ubiquitinyl-[acceptor protein]-L-lysine.. Its pathway is protein modification; protein ubiquitination. The sequence is that of Putative RING-H2 finger protein ATL62 (ATL62) from Arabidopsis thaliana (Mouse-ear cress).